Here is a 136-residue protein sequence, read N- to C-terminus: Evasin P991 (136 aa).

The N-terminal stretch at 1 to 28 (MHSTIVYACLLALAVFVALHGTPLAALA) is a signal peptide. N-linked (GlcNAc...) asparagine glycans are attached at residues asparagine 41, asparagine 61, asparagine 64, asparagine 78, asparagine 92, asparagine 100, and asparagine 122. 4 cysteine pairs are disulfide-bonded: cysteine 55–cysteine 77, cysteine 73–cysteine 114, cysteine 90–cysteine 119, and cysteine 109–cysteine 128.

The protein localises to the secreted. Functionally, salivary chemokine-binding protein which has chemokine-neutralizing activity and binds to host chemokines CCL2, CCL3, CCL3L1, CCL4, CCL4L1, CCL5, CCL6, CCL7, CCL8, CCL9, CCL11, CCL12, CCL13, CCL14, CCL16, CCL17, CCL18, CCL19, CCL22, CCL23, CCL24 and CCL27. The sequence is that of Evasin P991 from Amblyomma cajennense (Cayenne tick).